Reading from the N-terminus, the 715-residue chain is Protein DOA1 (715 aa).

WD repeat units lie at residues 11–40 (GHDQ…RLWS), 53–82 (GQGF…NGVP), 97–125 (GHQG…KVWK), 135–166 (AHNA…KLWQ), 177–206 (IHND…KLVD), 218–247 (GHES…RIWS), and 259–288 (LPAI…RIFS). Serine 332 bears the Phosphoserine mark. The PFU domain maps to 352–449 (AHQFSNSSWK…NGISLDQPND (98 aa)). The interaction with HSE1 stretch occupies residues 434–440 (FILKNTN). Residues 465–715 (KVLPVKQYLI…RFKDIFDDLS (251 aa)) enclose the PUL domain. ARM repeat units lie at residues 478–512 (YNPD…LHDI), 513–543 (DESW…VRLI), 544–582 (VKKL…CFNN), 583–635 (ENWG…LVTK), 636–680 (GNSD…LATV), and 681–715 (EPTL…DDLS).

Belongs to the WD repeat PLAP family. In terms of assembly, forms a complex composed of CDC48, NPL4, UFD1, DOA1, SHP1 and deubiquitinase OTU1; within the complex interacts with CDC48. Interacts (via PUL domain) with CDC48 (via C-terminus); the interaction is direct. Forms a complex composed of CDC48, DOA1, deubiquitinase UBP3 and probably BRE5; within the complex interacts with CDC48 and UBP3. May form a complex composed of VPS27, HSE1 and DOA1. Interacts with HSE1 (via SH3 domain). Interacts (via WD repeats and PFU domain) with ubiquitin; the interaction is direct. Interacts with ubiquitinated FZO1 but not unmodified FZO1; the interaction recruits FZO1 to CDC48 and promotes FZO1 proteasomal degradation.

Its subcellular location is the nucleus. The protein resides in the cytoplasm. It is found in the mitochondrion outer membrane. The protein localises to the endosome membrane. In terms of biological role, ubiquitin-binding protein involved in protein ubiquitination, sorting and degradation. Acts as a ubiquitinated substrate-recruiting adapter for chaperone ATPase CDC48 by binding mono- or polyubiquitin chains. Depending on the context, promotes or prevents proteasomal degradation of ubiquitinated proteins. Involved in the ubiquitin fusion degradation (UFD) pathway by promoting the degradation of ubiquitinated proteins. Involved in the mitochondria-associated degradation pathway (MAD) by promoting the degradation of several ubiquitinated membrane proteins. By competing with UFD2 to bind CDC48, prevents the multi-ubiquitination and subsequent degradation of UFD2-dependent substrates. Required for ribophagy, a process which relocalizes ribosomal particles into the vacuole for degradation in response to starvation. Involved in the ubiquitin-mediated sorting of membrane proteins into multivesicular bodies (MVBs). In addition, plays an essential role in maintaining cellular ubiquitin levels. May affect indirectly the degradation of ubiquitinylated proteins by regulating cellular ubiquitin levels. This chain is Protein DOA1, found in Saccharomyces cerevisiae (strain ATCC 204508 / S288c) (Baker's yeast).